The sequence spans 812 residues: Protein let-653 (812 aa).

The N-terminal stretch at 1–21 is a signal peptide; sequence MRHPLISLLLLIAFYSTSSEA. 2 Apple domains span residues 26–116 and 123–209; these read CNSF…WKYC and CSGE…ENNC. 6 disulfides stabilise this stretch: cysteine 26–cysteine 116, cysteine 53–cysteine 88, cysteine 57–cysteine 72, cysteine 123–cysteine 209, cysteine 154–cysteine 178, and cysteine 158–cysteine 166. N-linked (GlcNAc...) asparagine glycosylation is found at asparagine 172, asparagine 211, and asparagine 272. A ZP domain is found at 221–725; it reads ECRDNGISVS…NTCDDVEGCD (505 aa). 2 stretches are compositionally biased toward low complexity: residues 375 to 449 and 496 to 584; these read QVTT…STTT and PTTT…PASS. 2 disordered regions span residues 375–461 and 494–584; these read QVTT…STIM and DVPT…PASS. Asparagine 771 is a glycosylation site (N-linked (GlcNAc...) asparagine).

Cleaved at the C-terminal domain. In terms of tissue distribution, expressed in external cuticle-producing epithelial cells including the epidermis, vulva, rectum, excretory duct and excretory pore.

It localises to the apical cell membrane. It is found in the secreted. The protein localises to the extracellular space. Required for epithelial tube development and shaping. Involved in the morphogenesis and function of the three unicellular tubes of the excretory system, the canal cell, the duct cell and the pore cell. Also plays a role in cuticle development, alae formation and shaping of the vulval lumen. Required for larval development. This chain is Protein let-653, found in Caenorhabditis elegans.